The chain runs to 324 residues: D-alanine--D-alanine ligase (324 aa).

Residues 112–312 (KAVLAAAGVT…FDQLVLWIVE (201 aa)) enclose the ATP-grasp domain. 139–193 (LQPPYVVKPNAEGSSVGVFIIKEGANRPPEEVGAPSWTFGEEVMVEPYIQGMELA) provides a ligand contact to ATP. The Mg(2+) site is built by Asp-265, Glu-279, and Asn-281.

This sequence belongs to the D-alanine--D-alanine ligase family. It depends on Mg(2+) as a cofactor. Requires Mn(2+) as cofactor.

Its subcellular location is the cytoplasm. It catalyses the reaction 2 D-alanine + ATP = D-alanyl-D-alanine + ADP + phosphate + H(+). It functions in the pathway cell wall biogenesis; peptidoglycan biosynthesis. Functionally, cell wall formation. In Caulobacter vibrioides (strain ATCC 19089 / CIP 103742 / CB 15) (Caulobacter crescentus), this protein is D-alanine--D-alanine ligase.